A 126-amino-acid chain; its full sequence is Histone H2B type 1-N (126 aa).

Low complexity predominate over residues 1–12 (MPEPSKSAPAPK). Residues 1-36 (MPEPSKSAPAPKKGSKKAVTKAQKKDGKKRKRSRKE) are disordered. The residue at position 2 (Pro-2) is an N-acetylproline. At Glu-3 the chain carries ADP-ribosyl glutamic acid. At Lys-6 the chain carries N6-(2-hydroxyisobutyryl)lysine; alternate. At Lys-6 the chain carries N6-(beta-hydroxybutyryl)lysine; alternate. The residue at position 6 (Lys-6) is an N6-acetyllysine; alternate. Residue Lys-6 is modified to N6-butyryllysine; alternate. N6-crotonyllysine; alternate is present on Lys-6. The residue at position 6 (Lys-6) is an N6-lactoyllysine; alternate. A Glycyl lysine isopeptide (Lys-Gly) (interchain with G-Cter in SUMO2); alternate cross-link involves residue Lys-6. ADP-ribosylserine is present on Ser-7. The residue at position 12 (Lys-12) is an N6-(beta-hydroxybutyryl)lysine; alternate. 2 positions are modified to N6-acetyllysine; alternate: Lys-12 and Lys-13. An N6-crotonyllysine; alternate mark is found at Lys-12 and Lys-13. Lys-12 bears the N6-lactoyllysine; alternate mark. N6-(2-hydroxyisobutyryl)lysine; alternate is present on Lys-13. Ser-15 is subject to Phosphoserine; by STK4/MST1. 4 positions are modified to N6-acetyllysine; alternate: Lys-16, Lys-17, Lys-21, and Lys-24. 4 positions are modified to N6-crotonyllysine; alternate: Lys-16, Lys-17, Lys-21, and Lys-24. An N6-lactoyllysine; alternate mark is found at Lys-16, Lys-17, Lys-21, and Lys-24. N6-glutaryllysine; alternate is present on Lys-17. An N6-(2-hydroxyisobutyryl)lysine; alternate mark is found at Lys-21 and Lys-24. N6-(beta-hydroxybutyryl)lysine; alternate is present on Lys-21. Lys-21 bears the N6-butyryllysine; alternate mark. A Glycyl lysine isopeptide (Lys-Gly) (interchain with G-Cter in SUMO2); alternate cross-link involves residue Lys-21. Lys-25 carries the N6-(2-hydroxyisobutyryl)lysine modification. Lys-35 bears the N6-(2-hydroxyisobutyryl)lysine; alternate mark. Lys-35 carries the N6-(beta-hydroxybutyryl)lysine; alternate modification. Lys-35 is modified (N6-crotonyllysine; alternate). At Lys-35 the chain carries N6-glutaryllysine; alternate. An N6-succinyllysine; alternate modification is found at Lys-35. A Glycyl lysine isopeptide (Lys-Gly) (interchain with G-Cter in ubiquitin); alternate cross-link involves residue Lys-35. At Glu-36 the chain carries PolyADP-ribosyl glutamic acid. Phosphoserine; by AMPK is present on Ser-37. Residues Lys-44, Lys-47, and Lys-58 each carry the N6-(2-hydroxyisobutyryl)lysine; alternate modification. The residue at position 44 (Lys-44) is an N6-lactoyllysine; alternate. N6-glutaryllysine; alternate is present on residues Lys-44 and Lys-47. The residue at position 47 (Lys-47) is an N6-methyllysine; alternate. At Lys-58 the chain carries N6,N6-dimethyllysine; alternate. Dimethylated arginine is present on Arg-80. Lys-86 carries the post-translational modification N6-(2-hydroxyisobutyryl)lysine; alternate. The residue at position 86 (Lys-86) is an N6-acetyllysine; alternate. Lys-86 carries the N6-lactoyllysine; alternate modification. Lys-86 is modified (N6,N6,N6-trimethyllysine; alternate). Residues Arg-87 and Arg-93 each carry the omega-N-methylarginine modification. At Lys-109 the chain carries N6-(2-hydroxyisobutyryl)lysine; alternate. Lys-109 bears the N6-lactoyllysine; alternate mark. Lys-109 carries the N6-glutaryllysine; alternate modification. Lys-109 is subject to N6-methyllysine; alternate. Ser-113 carries O-linked (GlcNAc) serine glycosylation. At Thr-116 the chain carries Phosphothreonine. N6-(2-hydroxyisobutyryl)lysine; alternate is present on residues Lys-117 and Lys-121. The residue at position 117 (Lys-117) is an N6-(beta-hydroxybutyryl)lysine; alternate. Lys-117 and Lys-121 each carry N6-lactoyllysine; alternate. N6-glutaryllysine; alternate is present on residues Lys-117 and Lys-121. An N6-succinyllysine; alternate mark is found at Lys-117 and Lys-121. Residue Lys-117 is modified to N6-methylated lysine; alternate. Residue Lys-121 forms a Glycyl lysine isopeptide (Lys-Gly) (interchain with G-Cter in ubiquitin); alternate linkage.

This sequence belongs to the histone H2B family. As to quaternary structure, the nucleosome is a histone octamer containing two molecules each of H2A, H2B, H3 and H4 assembled in one H3-H4 heterotetramer and two H2A-H2B heterodimers. The octamer wraps approximately 147 bp of DNA. Post-translationally, monoubiquitination at Lys-35 (H2BK34Ub) by the MSL1/MSL2 dimer is required for histone H3 'Lys-4' (H3K4me) and 'Lys-79' (H3K79me) methylation and transcription activation at specific gene loci, such as HOXA9 and MEIS1 loci. Similarly, monoubiquitination at Lys-121 (H2BK120Ub) by the RNF20/40 complex gives a specific tag for epigenetic transcriptional activation and is also prerequisite for histone H3 'Lys-4' and 'Lys-79' methylation. It also functions cooperatively with the FACT dimer to stimulate elongation by RNA polymerase II. H2BK120Ub also acts as a regulator of mRNA splicing: deubiquitination by USP49 is required for efficient cotranscriptional splicing of a large set of exons. Phosphorylated on Ser-15 (H2BS14ph) by STK4/MST1 during apoptosis; which facilitates apoptotic chromatin condensation. Also phosphorylated on Ser-15 in response to DNA double strand breaks (DSBs), and in correlation with somatic hypermutation and immunoglobulin class-switch recombination. Phosphorylation at Ser-37 (H2BS36ph) by AMPK in response to stress promotes transcription. In terms of processing, glcNAcylation at Ser-113 promotes monoubiquitination of Lys-121. It fluctuates in response to extracellular glucose, and associates with transcribed genes. Post-translationally, ADP-ribosylated by PARP1 or PARP2 on Ser-7 (H2BS6ADPr) in response to DNA damage. H2BS6ADPr promotes recruitment of CHD1L. Mono-ADP-ribosylated on Glu-3 (H2BE2ADPr) by PARP3 in response to single-strand breaks. Poly ADP-ribosylation on Glu-36 (H2BE35ADPr) by PARP1 regulates adipogenesis: it inhibits phosphorylation at Ser-37 (H2BS36ph), thereby blocking expression of pro-adipogenetic genes. Crotonylation (Kcr) is specifically present in male germ cells and marks testis-specific genes in post-meiotic cells, including X-linked genes that escape sex chromosome inactivation in haploid cells. Crotonylation marks active promoters and enhancers and confers resistance to transcriptional repressors. It is also associated with post-meiotically activated genes on autosomes. In terms of processing, lactylated in macrophages by EP300/P300 by using lactoyl-CoA directly derived from endogenous or exogenous lactate, leading to stimulates gene transcription.

The protein resides in the nucleus. The protein localises to the chromosome. Core component of nucleosome. Nucleosomes wrap and compact DNA into chromatin, limiting DNA accessibility to the cellular machineries which require DNA as a template. Histones thereby play a central role in transcription regulation, DNA repair, DNA replication and chromosomal stability. DNA accessibility is regulated via a complex set of post-translational modifications of histones, also called histone code, and nucleosome remodeling. This is Histone H2B type 1-N (H2BC15) from Bos taurus (Bovine).